The following is a 170-amino-acid chain: Adenine phosphoribosyltransferase (170 aa).

Belongs to the purine/pyrimidine phosphoribosyltransferase family. As to quaternary structure, homodimer.

The protein localises to the cytoplasm. It catalyses the reaction AMP + diphosphate = 5-phospho-alpha-D-ribose 1-diphosphate + adenine. Its pathway is purine metabolism; AMP biosynthesis via salvage pathway; AMP from adenine: step 1/1. Functionally, catalyzes a salvage reaction resulting in the formation of AMP, that is energically less costly than de novo synthesis. The chain is Adenine phosphoribosyltransferase from Thermosynechococcus vestitus (strain NIES-2133 / IAM M-273 / BP-1).